A 154-amino-acid chain; its full sequence is Myoglobin (154 aa).

The 147-residue stretch at Gly-2–Lys-148 folds into the Globin domain. The residue at position 4 (Ser-4) is a Phosphoserine. His-65 contacts nitrite. His-65 lines the O2 pocket. Thr-68 is modified (phosphothreonine). His-94 serves as a coordination point for heme b.

It belongs to the globin family. Monomeric.

Its subcellular location is the cytoplasm. The protein localises to the sarcoplasm. The enzyme catalyses Fe(III)-heme b-[protein] + nitric oxide + H2O = Fe(II)-heme b-[protein] + nitrite + 2 H(+). The catalysed reaction is H2O2 + AH2 = A + 2 H2O. Its function is as follows. Monomeric heme protein which primary function is to store oxygen and facilitate its diffusion within muscle tissues. Reversibly binds oxygen through a pentacoordinated heme iron and enables its timely and efficient release as needed during periods of heightened demand. Depending on the oxidative conditions of tissues and cells, and in addition to its ability to bind oxygen, it also has a nitrite reductase activity whereby it regulates the production of bioactive nitric oxide. Under stress conditions, like hypoxia and anoxia, it also protects cells against reactive oxygen species thanks to its pseudoperoxidase activity. The chain is Myoglobin (MB) from Callithrix jacchus (White-tufted-ear marmoset).